The primary structure comprises 290 residues: Bifunctional protein FolD (290 aa).

Residues 174–176 (GHS), Ile199, and Ile240 contribute to the NADP(+) site.

The protein belongs to the tetrahydrofolate dehydrogenase/cyclohydrolase family. In terms of assembly, homodimer.

It catalyses the reaction (6R)-5,10-methylene-5,6,7,8-tetrahydrofolate + NADP(+) = (6R)-5,10-methenyltetrahydrofolate + NADPH. It carries out the reaction (6R)-5,10-methenyltetrahydrofolate + H2O = (6R)-10-formyltetrahydrofolate + H(+). It functions in the pathway one-carbon metabolism; tetrahydrofolate interconversion. Its function is as follows. Catalyzes the oxidation of 5,10-methylenetetrahydrofolate to 5,10-methenyltetrahydrofolate and then the hydrolysis of 5,10-methenyltetrahydrofolate to 10-formyltetrahydrofolate. The sequence is that of Bifunctional protein FolD from Methanosarcina acetivorans (strain ATCC 35395 / DSM 2834 / JCM 12185 / C2A).